Here is a 198-residue protein sequence, read N- to C-terminus: 3-isopropylmalate dehydratase small subunit (198 aa).

Belongs to the LeuD family. LeuD type 1 subfamily. In terms of assembly, heterodimer of LeuC and LeuD.

The catalysed reaction is (2R,3S)-3-isopropylmalate = (2S)-2-isopropylmalate. Its pathway is amino-acid biosynthesis; L-leucine biosynthesis; L-leucine from 3-methyl-2-oxobutanoate: step 2/4. In terms of biological role, catalyzes the isomerization between 2-isopropylmalate and 3-isopropylmalate, via the formation of 2-isopropylmaleate. The protein is 3-isopropylmalate dehydratase small subunit of Mycobacterium leprae (strain Br4923).